The primary structure comprises 102 residues: Small ribosomal subunit protein uS10 (102 aa).

This sequence belongs to the universal ribosomal protein uS10 family. As to quaternary structure, part of the 30S ribosomal subunit.

In terms of biological role, involved in the binding of tRNA to the ribosomes. In Latilactobacillus sakei subsp. sakei (strain 23K) (Lactobacillus sakei subsp. sakei), this protein is Small ribosomal subunit protein uS10.